The chain runs to 456 residues: UDP-N-acetylmuramate--L-alanine ligase (456 aa).

Glycine 117–threonine 123 is an ATP binding site.

This sequence belongs to the MurCDEF family.

The protein resides in the cytoplasm. It carries out the reaction UDP-N-acetyl-alpha-D-muramate + L-alanine + ATP = UDP-N-acetyl-alpha-D-muramoyl-L-alanine + ADP + phosphate + H(+). It participates in cell wall biogenesis; peptidoglycan biosynthesis. Functionally, cell wall formation. This chain is UDP-N-acetylmuramate--L-alanine ligase, found in Clostridium tetani (strain Massachusetts / E88).